Reading from the N-terminus, the 483-residue chain is Glutamate--tRNA ligase (483 aa).

The short motif at 11-21 (PSPTGLLHIGN) is the 'HIGH' region element. The 'KMSKS' region motif lies at 255 to 259 (KLSKR). Lys-258 lines the ATP pocket.

It belongs to the class-I aminoacyl-tRNA synthetase family. Glutamate--tRNA ligase type 1 subfamily. Monomer.

Its subcellular location is the cytoplasm. The enzyme catalyses tRNA(Glu) + L-glutamate + ATP = L-glutamyl-tRNA(Glu) + AMP + diphosphate. In terms of biological role, catalyzes the attachment of glutamate to tRNA(Glu) in a two-step reaction: glutamate is first activated by ATP to form Glu-AMP and then transferred to the acceptor end of tRNA(Glu). The protein is Glutamate--tRNA ligase of Lactococcus lactis subsp. cremoris (strain SK11).